Consider the following 40-residue polypeptide: Photosystem II reaction center protein J (40 aa).

The helical transmembrane segment at 8–28 (IPLWLIGTVAGIPVIGSVGVF) threads the bilayer.

It belongs to the PsbJ family. As to quaternary structure, PSII is composed of 1 copy each of membrane proteins PsbA, PsbB, PsbC, PsbD, PsbE, PsbF, PsbH, PsbI, PsbJ, PsbK, PsbL, PsbM, PsbT, PsbX, PsbY, PsbZ, Psb30/Ycf12, at least 3 peripheral proteins of the oxygen-evolving complex and a large number of cofactors. It forms dimeric complexes.

The protein resides in the plastid. It localises to the chloroplast thylakoid membrane. In terms of biological role, one of the components of the core complex of photosystem II (PSII). PSII is a light-driven water:plastoquinone oxidoreductase that uses light energy to abstract electrons from H(2)O, generating O(2) and a proton gradient subsequently used for ATP formation. It consists of a core antenna complex that captures photons, and an electron transfer chain that converts photonic excitation into a charge separation. This is Photosystem II reaction center protein J from Acorus calamus (Sweet flag).